We begin with the raw amino-acid sequence, 102 residues long: Large ribosomal subunit protein bL21 (102 aa).

The protein belongs to the bacterial ribosomal protein bL21 family. In terms of assembly, part of the 50S ribosomal subunit. Contacts protein L20.

In terms of biological role, this protein binds to 23S rRNA in the presence of protein L20. The chain is Large ribosomal subunit protein bL21 from Lachnoclostridium phytofermentans (strain ATCC 700394 / DSM 18823 / ISDg) (Clostridium phytofermentans).